The following is a 1939-amino-acid chain: Myosin-4 (1939 aa).

In terms of domain architecture, Myosin N-terminal SH3-like spans 33-82; it reads DAKSSVFVVDAKESYVKATVQSREGGKVTAKTEGGATVTVKDDQVFSMNP. Phosphoserine is present on Ser-36. 2 positions are modified to phosphothreonine: Thr-64 and Thr-69. Ser-79 bears the Phosphoserine mark. Residues 86–782 enclose the Myosin motor domain; sequence DKIEDMAMMT…LLGTLEEMRD (697 aa). N6,N6,N6-trimethyllysine is present on Lys-130. 179 to 186 lines the ATP pocket; the sequence is GESGAGKT. Tyr-389 carries the phosphotyrosine modification. The residue at position 391 (Thr-391) is a Phosphothreonine. Ser-392 bears the Phosphoserine mark. A Phosphothreonine modification is found at Thr-419. Phosphotyrosine is present on Tyr-424. Phosphoserine is present on Ser-625. The segment at 659–681 is actin-binding; the sequence is LNKLMTNLKSTHPHFVRCLIPNE. Position 757 is a pros-methylhistidine (His-757). An actin-binding region spans residues 761 to 775; it reads KFGHTKVFFKAGLLG. At Thr-776 the chain carries Phosphothreonine. Residues 785 to 814 form the IQ domain; that stretch reads LAQLITRTQAVCRGYLMRVEFKKMMERRES. Residues 843-1939 adopt a coiled-coil conformation; sequence LLKSAETEKE…EVHTKVISEE (1097 aa). A phosphoserine mark is found at Ser-1092 and Ser-1096. Disordered regions lie at residues 1128-1147 and 1153-1172; these read AERASRAKAEKQRSDLSREL and RLEEAGGATSAQIEMNKKRE. Ser-1162 and Ser-1237 each carry phosphoserine. Thr-1241 is subject to Phosphothreonine. Ser-1243 bears the Phosphoserine mark. Residue Thr-1255 is modified to Phosphothreonine. At Ser-1261 the chain carries Phosphoserine. Position 1265 is a phosphothreonine (Thr-1265). The tract at residues 1276–1299 is disordered; the sequence is ELSTQKARLHTESGEFSRQLDEKD. Phosphoserine is present on Ser-1278. Residues 1284–1299 show a composition bias toward basic and acidic residues; the sequence is LHTESGEFSRQLDEKD. Thr-1286 carries the phosphothreonine modification. 5 positions are modified to phosphoserine: Ser-1288, Ser-1292, Ser-1303, Ser-1306, and Ser-1413. Tyr-1464 bears the Phosphotyrosine mark. Residue Thr-1467 is modified to Phosphothreonine. A Phosphoserine modification is found at Ser-1474. At Tyr-1492 the chain carries Phosphotyrosine. Ser-1495 is subject to Phosphoserine. At Thr-1501 the chain carries Phosphothreonine. Phosphoserine is present on Ser-1514. Position 1517 is a phosphothreonine (Thr-1517). 8 positions are modified to phosphoserine: Ser-1542, Ser-1547, Ser-1554, Ser-1574, Ser-1600, Ser-1603, Ser-1714, and Ser-1726. Residues Thr-1730 and Thr-1736 each carry the phosphothreonine modification. Residue Ser-1739 is modified to Phosphoserine.

The protein belongs to the TRAFAC class myosin-kinesin ATPase superfamily. Myosin family. Muscle myosin is a hexameric protein that consists of 2 heavy chain subunits (MHC), 2 alkali light chain subunits (MLC) and 2 regulatory light chain subunits (MLC-2). Expressed in type 2b myofibers in the tibialis anterior muscle (at protein level).

It localises to the cytoplasm. The protein resides in the myofibril. In terms of biological role, muscle contraction. This chain is Myosin-4 (Myh4), found in Mus musculus (Mouse).